A 143-amino-acid chain; its full sequence is Interleukin-3 (143 aa).

An N-terminal signal peptide occupies residues 1-23 (MSSFPILHLLLLLLGCQVPQAQG). Asparagine 79 is a glycosylation site (N-linked (GlcNAc...) asparagine).

This sequence belongs to the IL-3 family. As to quaternary structure, monomer.

The protein resides in the secreted. Functionally, granulocyte/macrophage colony-stimulating factors are cytokines that act in hematopoiesis by controlling the production, differentiation, and function of 2 related white cell populations of the blood, the granulocytes and the monocytes-macrophages. Its function is as follows. This CSF induces granulocytes, macrophages, mast cells, stem cells, erythroid cells, eosinophils and megakaryocytes. The sequence is that of Interleukin-3 (IL3) from Canis lupus familiaris (Dog).